Reading from the N-terminus, the 281-residue chain is Diaminopimelate epimerase (281 aa).

Substrate contacts are provided by Asn13, Gln51, and Asn70. The active-site Proton donor is Cys79. Substrate contacts are provided by residues 80–81 (GN), Asn163, Asn196, and 214–215 (ER). Cys223 (proton acceptor) is an active-site residue. 224–225 (GS) contributes to the substrate binding site.

Belongs to the diaminopimelate epimerase family. In terms of assembly, homodimer.

It localises to the cytoplasm. The enzyme catalyses (2S,6S)-2,6-diaminopimelate = meso-2,6-diaminopimelate. It functions in the pathway amino-acid biosynthesis; L-lysine biosynthesis via DAP pathway; DL-2,6-diaminopimelate from LL-2,6-diaminopimelate: step 1/1. In terms of biological role, catalyzes the stereoinversion of LL-2,6-diaminopimelate (L,L-DAP) to meso-diaminopimelate (meso-DAP), a precursor of L-lysine and an essential component of the bacterial peptidoglycan. The chain is Diaminopimelate epimerase from Alcanivorax borkumensis (strain ATCC 700651 / DSM 11573 / NCIMB 13689 / SK2).